Reading from the N-terminus, the 206-residue chain is uncharacterized protein (206 aa).

The interval 81-132 (EEQQQQQHHVHGPGCSHGHHHDSHANDGHHDEHHDEHHDHVNPDDVEDEFPR) is disordered. The segment covering 82 to 96 (EQQQQQHHVHGPGCS) has biased composition (low complexity). Positions 103 to 123 (SHANDGHHDEHHDEHHDHVNP) are enriched in basic and acidic residues. The chain crosses the membrane as a helical span at residues 150-166 (YLTALCLLPIIGSLFSI).

It localises to the membrane. This is an uncharacterized protein from Dictyostelium discoideum (Social amoeba).